A 719-amino-acid polypeptide reads, in one-letter code: Glutathionylspermidine synthase (719 aa).

The 147-residue stretch at 54–200 (CLPLSSFERK…TESGEVELLD (147 aa)) folds into the Peptidase C51 domain. Arginine 350 contacts glutathione. 350–352 (RFD) is a binding site for ATP. The Mg(2+) site is built by aspartate 352, glutamate 364, and asparagine 366. Serine 369 serves as a coordination point for glutathione. Position 432 (glutamate 432) interacts with spermidine. 2 residues coordinate glutathione: glutamate 433 and threonine 501. Residues lysine 544, lysine 579, glycine 586, glutamine 653, and 689 to 691 (KIT) contribute to the ATP site.

This sequence in the C-terminal section; belongs to the glutathionylspermidine synthase preATP-grasp family. Mg(2+) is required as a cofactor. In terms of processing, the N-terminus is blocked.

The catalysed reaction is spermidine + glutathione + ATP = glutathionylspermidine + ADP + phosphate + H(+). Conjugates glutathione (gamma-Glu-Cys-Gly) and spermidine to form glutathionylspermidine in the biosynthesis trypanothione (N(1),N(8)-bis(glutathionyl)spermidine), which is involved in maintaining intracellular thiol redox and in defense against oxidants. The sequence is that of Glutathionylspermidine synthase (GSP) from Crithidia fasciculata.